Here is a 292-residue protein sequence, read N- to C-terminus: Acetylglutamate kinase (292 aa).

Residues 64 to 65 (GG), Arg-86, and Asn-190 each bind substrate.

It belongs to the acetylglutamate kinase family. ArgB subfamily.

The protein resides in the cytoplasm. The catalysed reaction is N-acetyl-L-glutamate + ATP = N-acetyl-L-glutamyl 5-phosphate + ADP. Its pathway is amino-acid biosynthesis; L-arginine biosynthesis; N(2)-acetyl-L-ornithine from L-glutamate: step 2/4. In terms of biological role, catalyzes the ATP-dependent phosphorylation of N-acetyl-L-glutamate. The chain is Acetylglutamate kinase from Trichlorobacter lovleyi (strain ATCC BAA-1151 / DSM 17278 / SZ) (Geobacter lovleyi).